We begin with the raw amino-acid sequence, 208 residues long: V-type ATP synthase subunit D (208 aa).

Belongs to the V-ATPase D subunit family.

Produces ATP from ADP in the presence of a proton gradient across the membrane. This Streptococcus pyogenes serotype M6 (strain ATCC BAA-946 / MGAS10394) protein is V-type ATP synthase subunit D.